The following is a 671-amino-acid chain: Transcription factor xilB (671 aa).

The segment at residues Cys11–Cys46 is a DNA-binding region (zn(2)-C6 fungal-type). The disordered stretch occupies residues Tyr48–His90. The span at Gly49–Pro62 shows a compositional bias: pro residues. A compositionally biased stretch (basic and acidic residues) spans Arg77–His90. Positions Pro148–Gln593 are fungal transcription factor domain. The tract at residues Trp629 to Asp650 is disordered.

Its subcellular location is the nucleus. Transcription factor; part of the gene cluster that mediates the biosynthesis of the 6-methyl-2-pyrone derivative xylariolide D. May play a role in the regulation of the expression of the highly reducing polyketide synthase xilA and the cytochroe P450 monooxygenase xilC. The chain is Transcription factor xilB from Penicillium rubens (strain ATCC 28089 / DSM 1075 / NRRL 1951 / Wisconsin 54-1255) (Penicillium chrysogenum).